A 466-amino-acid polypeptide reads, in one-letter code: Tryptophan synthase beta chain 2, chloroplastic (466 aa).

K161 is subject to N6-(pyridoxal phosphate)lysine.

This sequence belongs to the TrpB family. Tetramer of two alpha and two beta chains. Pyridoxal 5'-phosphate is required as a cofactor.

The protein localises to the plastid. It localises to the chloroplast. The catalysed reaction is (1S,2R)-1-C-(indol-3-yl)glycerol 3-phosphate + L-serine = D-glyceraldehyde 3-phosphate + L-tryptophan + H2O. It participates in amino-acid biosynthesis; L-tryptophan biosynthesis; L-tryptophan from chorismate: step 5/5. Its function is as follows. The beta subunit is responsible for the synthesis of L-tryptophan from indole and L-serine. The protein is Tryptophan synthase beta chain 2, chloroplastic (TSB) of Camptotheca acuminata (Happy tree).